The primary structure comprises 362 residues: 3-dehydroquinate synthase (362 aa).

Residues 71–76 (DGEQYK), 105–109 (GVVGD), 129–130 (TT), Lys-142, Lys-151, and 169–172 (CLKT) each bind NAD(+). The Zn(2+) site is built by Glu-184, His-247, and His-264.

This sequence belongs to the sugar phosphate cyclases superfamily. Dehydroquinate synthase family. NAD(+) serves as cofactor. The cofactor is Co(2+). It depends on Zn(2+) as a cofactor.

Its subcellular location is the cytoplasm. It catalyses the reaction 7-phospho-2-dehydro-3-deoxy-D-arabino-heptonate = 3-dehydroquinate + phosphate. Its pathway is metabolic intermediate biosynthesis; chorismate biosynthesis; chorismate from D-erythrose 4-phosphate and phosphoenolpyruvate: step 2/7. Functionally, catalyzes the conversion of 3-deoxy-D-arabino-heptulosonate 7-phosphate (DAHP) to dehydroquinate (DHQ). This is 3-dehydroquinate synthase from Shigella flexneri.